The sequence spans 613 residues: Transcription factor cbf11 (613 aa).

The tract at residues Asn32–Gly58 is disordered.

It belongs to the Su(H) family.

The protein localises to the cytoplasm. It is found in the nucleus. Functionally, transcription factor that behaves as a negative regulator of adhesion. Recognizes specifically the canonical CSL response element GTGA/GGAA. May also play a cbf12-antagonistic role in the regulation of a number of other important processes such as extracellular material production, colony morphogenesis, ploidy maintenance, or meiosis. The sequence is that of Transcription factor cbf11 (cbf11) from Schizosaccharomyces pombe (strain 972 / ATCC 24843) (Fission yeast).